Here is a 679-residue protein sequence, read N- to C-terminus: Glycine--tRNA ligase beta subunit (679 aa).

It belongs to the class-II aminoacyl-tRNA synthetase family. Tetramer of two alpha and two beta subunits.

The protein localises to the cytoplasm. The enzyme catalyses tRNA(Gly) + glycine + ATP = glycyl-tRNA(Gly) + AMP + diphosphate. The sequence is that of Glycine--tRNA ligase beta subunit from Streptococcus pyogenes serotype M18 (strain MGAS8232).